Here is a 492-residue protein sequence, read N- to C-terminus: 2,3-bisphosphoglycerate-independent phosphoglycerate mutase (492 aa).

Mn(2+) contacts are provided by D11 and S61. Catalysis depends on S61, which acts as the Phosphoserine intermediate. Substrate-binding positions include H118, 147–148 (RD), R177, R183, 248–251 (RSDR), and K321. Mn(2+)-binding residues include D387, H391, D428, H429, and H446.

This sequence belongs to the BPG-independent phosphoglycerate mutase family. Monomer. Requires Mn(2+) as cofactor.

It carries out the reaction (2R)-2-phosphoglycerate = (2R)-3-phosphoglycerate. It participates in carbohydrate degradation; glycolysis; pyruvate from D-glyceraldehyde 3-phosphate: step 3/5. Functionally, catalyzes the interconversion of 2-phosphoglycerate and 3-phosphoglycerate. This chain is 2,3-bisphosphoglycerate-independent phosphoglycerate mutase, found in Wolinella succinogenes (strain ATCC 29543 / DSM 1740 / CCUG 13145 / JCM 31913 / LMG 7466 / NCTC 11488 / FDC 602W) (Vibrio succinogenes).